Reading from the N-terminus, the 735-residue chain is Glutamine-dependent NAD(+) synthetase (735 aa).

The CN hydrolase domain occupies 4-274 (LRVATCNLNQ…VEVLDALVDL (271 aa)). Catalysis depends on Glu44, which acts as the Proton acceptor; for glutaminase activity. Lys113 functions as the For glutaminase activity in the catalytic mechanism. Cys174 serves as the catalytic Nucleophile; for glutaminase activity. Residues 324–711 (YHRPEEEIAF…STEGELRRRK (388 aa)) are ligase. 354–361 (PLSGGADS) is a binding site for ATP. Ser356 is a catalytic residue.

This sequence in the C-terminal section; belongs to the NAD synthetase family.

It catalyses the reaction deamido-NAD(+) + L-glutamine + ATP + H2O = L-glutamate + AMP + diphosphate + NAD(+) + H(+). The protein operates within cofactor biosynthesis; NAD(+) biosynthesis; NAD(+) from deamido-NAD(+) (L-Gln route): step 1/1. The protein is Glutamine-dependent NAD(+) synthetase of Oryza sativa subsp. indica (Rice).